A 398-amino-acid polypeptide reads, in one-letter code: tRNA-specific 2-thiouridylase MnmA (398 aa).

ATP contacts are provided by residues 19–26 (AMSGGVDS) and Leu-45. Cys-113 serves as the catalytic Nucleophile. Cysteines 113 and 210 form a disulfide. Gly-137 is a binding site for ATP. The tract at residues 160–162 (RDQ) is interaction with tRNA. Cys-210 serves as the catalytic Cysteine persulfide intermediate.

This sequence belongs to the MnmA/TRMU family.

The protein resides in the cytoplasm. The enzyme catalyses S-sulfanyl-L-cysteinyl-[protein] + uridine(34) in tRNA + AH2 + ATP = 2-thiouridine(34) in tRNA + L-cysteinyl-[protein] + A + AMP + diphosphate + H(+). Its function is as follows. Catalyzes the 2-thiolation of uridine at the wobble position (U34) of tRNA, leading to the formation of s(2)U34. In Rhodopseudomonas palustris (strain BisB5), this protein is tRNA-specific 2-thiouridylase MnmA.